The following is a 92-amino-acid chain: Small ribosomal subunit protein uS19c (92 aa).

The protein belongs to the universal ribosomal protein uS19 family.

The protein resides in the plastid. In terms of biological role, protein S19 forms a complex with S13 that binds strongly to the 16S ribosomal RNA. In Cuscuta reflexa (Southern Asian dodder), this protein is Small ribosomal subunit protein uS19c.